Here is a 235-residue protein sequence, read N- to C-terminus: Octanoyltransferase (235 aa).

Residues 30-214 form the BPL/LPL catalytic domain; that stretch reads NELEDTLLLL…YFGKVFGAKF (185 aa). Residues 75–82, 144–146, and 157–159 each bind substrate; these read RGGDVTYH, AIG, and GFA. C175 (acyl-thioester intermediate) is an active-site residue.

The protein belongs to the LipB family.

It is found in the cytoplasm. It catalyses the reaction octanoyl-[ACP] + L-lysyl-[protein] = N(6)-octanoyl-L-lysyl-[protein] + holo-[ACP] + H(+). It participates in protein modification; protein lipoylation via endogenous pathway; protein N(6)-(lipoyl)lysine from octanoyl-[acyl-carrier-protein]: step 1/2. Catalyzes the transfer of endogenously produced octanoic acid from octanoyl-acyl-carrier-protein onto the lipoyl domains of lipoate-dependent enzymes. Lipoyl-ACP can also act as a substrate although octanoyl-ACP is likely to be the physiological substrate. This chain is Octanoyltransferase, found in Caldicellulosiruptor saccharolyticus (strain ATCC 43494 / DSM 8903 / Tp8T 6331).